A 414-amino-acid polypeptide reads, in one-letter code: Gamma-glutamyl phosphate reductase (414 aa).

It belongs to the gamma-glutamyl phosphate reductase family.

It localises to the cytoplasm. The catalysed reaction is L-glutamate 5-semialdehyde + phosphate + NADP(+) = L-glutamyl 5-phosphate + NADPH + H(+). Its pathway is amino-acid biosynthesis; L-proline biosynthesis; L-glutamate 5-semialdehyde from L-glutamate: step 2/2. Catalyzes the NADPH-dependent reduction of L-glutamate 5-phosphate into L-glutamate 5-semialdehyde and phosphate. The product spontaneously undergoes cyclization to form 1-pyrroline-5-carboxylate. The sequence is that of Gamma-glutamyl phosphate reductase from Xanthomonas campestris pv. campestris (strain 8004).